A 409-amino-acid chain; its full sequence is Putative competence-damage inducible protein (409 aa).

The protein belongs to the CinA family.

This Clostridium botulinum (strain 657 / Type Ba4) protein is Putative competence-damage inducible protein.